The chain runs to 331 residues: RNA 3'-terminal phosphate cyclase (331 aa).

ATP contacts are provided by residues Q100 and 276 to 280 (HLADQ). The active-site Tele-AMP-histidine intermediate is H301.

This sequence belongs to the RNA 3'-terminal cyclase family. Type 1 subfamily.

The protein localises to the cytoplasm. The enzyme catalyses a 3'-end 3'-phospho-ribonucleotide-RNA + ATP = a 3'-end 2',3'-cyclophospho-ribonucleotide-RNA + AMP + diphosphate. Functionally, catalyzes the conversion of 3'-phosphate to a 2',3'-cyclic phosphodiester at the end of RNA. The mechanism of action of the enzyme occurs in 3 steps: (A) adenylation of the enzyme by ATP; (B) transfer of adenylate to an RNA-N3'P to produce RNA-N3'PP5'A; (C) and attack of the adjacent 2'-hydroxyl on the 3'-phosphorus in the diester linkage to produce the cyclic end product. The biological role of this enzyme is unknown but it is likely to function in some aspects of cellular RNA processing. The sequence is that of RNA 3'-terminal phosphate cyclase from Methanococcoides burtonii (strain DSM 6242 / NBRC 107633 / OCM 468 / ACE-M).